The primary structure comprises 204 residues: Holliday junction branch migration complex subunit RuvA (204 aa).

Positions 1-64 are domain I; the sequence is MIGKLKGTID…EDQLKLFGFM (64 aa). Residues 65–143 form a domain II region; that stretch reads TALEREWFNL…AFAGEAINIG (79 aa). A flexible linker region spans residues 144–151; that stretch reads LKQELGEG. Residues 152–204 are domain III; it reads VAAAPVADAVSALTNLGYSRDQAANAIAAAMKTAGEGADSAKLIRLGLKELAR.

The protein belongs to the RuvA family. As to quaternary structure, homotetramer. Forms an RuvA(8)-RuvB(12)-Holliday junction (HJ) complex. HJ DNA is sandwiched between 2 RuvA tetramers; dsDNA enters through RuvA and exits via RuvB. An RuvB hexamer assembles on each DNA strand where it exits the tetramer. Each RuvB hexamer is contacted by two RuvA subunits (via domain III) on 2 adjacent RuvB subunits; this complex drives branch migration. In the full resolvosome a probable DNA-RuvA(4)-RuvB(12)-RuvC(2) complex forms which resolves the HJ.

It localises to the cytoplasm. Functionally, the RuvA-RuvB-RuvC complex processes Holliday junction (HJ) DNA during genetic recombination and DNA repair, while the RuvA-RuvB complex plays an important role in the rescue of blocked DNA replication forks via replication fork reversal (RFR). RuvA specifically binds to HJ cruciform DNA, conferring on it an open structure. The RuvB hexamer acts as an ATP-dependent pump, pulling dsDNA into and through the RuvAB complex. HJ branch migration allows RuvC to scan DNA until it finds its consensus sequence, where it cleaves and resolves the cruciform DNA. The polypeptide is Holliday junction branch migration complex subunit RuvA (Rhizobium johnstonii (strain DSM 114642 / LMG 32736 / 3841) (Rhizobium leguminosarum bv. viciae)).